The chain runs to 129 residues: Follitropin subunit beta (129 aa).

Residues 1 to 20 (MKTAQFYIFFFCWKAIWCNG) form the signal peptide. 6 disulfide bridges follow: C21/C69, C35/C84, C38/C122, C46/C100, C50/C102, and C105/C112. Residues N25 and N42 are each glycosylated (N-linked (GlcNAc...) asparagine).

Belongs to the glycoprotein hormones subunit beta family. Heterodimer. The active follitropin is a heterodimer composed of an alpha chain/CGA shared with other hormones and a unique beta chain/FSHB shown here.

Its subcellular location is the secreted. In terms of biological role, together with the alpha chain CGA constitutes follitropin, the follicle-stimulating hormone, and provides its biological specificity to the hormone heterodimer. Binds FSHR, a G protein-coupled receptor, on target cells to activate downstream signaling pathways. Follitropin is involved in follicle development and spermatogenesis in reproductive organs. This is Follitropin subunit beta (FSHB) from Monodelphis domestica (Gray short-tailed opossum).